The chain runs to 742 residues: Envelope glycoprotein H (742 aa).

Positions 1 to 29 are cleaved as a signal peptide; it reads MRPGLPSYLIVLAVCLLSHLLSSRYGAEA. Over 30–719 the chain is Virion surface; the sequence is ISEPLDKAFH…VVDATDSRLL (690 aa). Residues Asn-55, Asn-62, Asn-67, and Asn-192 are each glycosylated (N-linked (GlcNAc...) asparagine; by host). The interval 217-280 is interaction with gL; sequence YLIDELRYVK…QTEKHELLVL (64 aa). Asn-641 and Asn-700 each carry an N-linked (GlcNAc...) asparagine; by host glycan. A helical membrane pass occupies residues 720 to 740; sequence MMSVYALSAIIGIYLLYRMLK. Topologically, residues 741-742 are intravirion; the sequence is TC.

Belongs to the herpesviridae glycoprotein H family. As to quaternary structure, interacts with glycoprotein L (gL); this interaction is necessary for the correct processing and cell surface expression of gH. The heterodimer gH/gL seems to interact with gB trimers during fusion. Forms the envelope pentamer complex (PC) composed of gH, gL, UL128, UL130, and UL131A. The pentamer interacts with host NRP2. Forms the envelope trimer complex composed of gH, gL, and gO. The trimer interacts with host PDGFRA. The trimer also interacts with host EPHA2. N-glycosylated, O-glycosylated, and sialylated.

It localises to the virion membrane. The protein resides in the host cell membrane. The protein localises to the host endosome membrane. In terms of biological role, the heterodimer glycoprotein H-glycoprotein L is required for the fusion of viral and plasma membranes leading to virus entry into the host cell. Following initial binding to host receptor, membrane fusion is mediated by the fusion machinery composed of gB and the heterodimer gH/gL. May also be involved in the fusion between the virion envelope and the outer nuclear membrane during virion morphogenesis. In human cytomegalovirus, forms two distincts complexes to mediate viral entry, a trimer and a pentamer at the surface of the virion envelope. The gH-gL-gO trimer is required for infection in fibroblasts by interacting with host PDGFRA, and in glioblastoma cells by interacting with host EPHA2. The gH-gL-UL128-UL130-UL131A pentamer is essential for viral entry in epithelial, endothelial and myeloid cells via interaction with host NRP2. This is Envelope glycoprotein H from Human cytomegalovirus (strain Towne) (HHV-5).